Consider the following 415-residue polypeptide: Protein CDC73 homolog (415 aa).

It belongs to the CDC73 family. Component of the nuclear PAF1 complex (PAF1C), which consists of VIP2/ELF7/PAF1, VIP3/SKI8/WDR61, VIP4/LEO1, VIP5/RTF1, VIP6/ELF8/CTR9 and CDC73. In terms of tissue distribution, expressed in root tips, shoot apex, young leaves and flowers, especially in stamen filaments and carpels.

The protein localises to the nucleus. Its function is as follows. Component of the PAF1 complex (PAF1C) which is involved in histone modifications such as methylation on histone H3 'Lys-4' (H3K4me3). Involved in regulation of flowering time. Required for the expression of the flowering repressors FLC and MADS-box genes of the MAF family. Required for histone H3 trimethylation on 'Lys-4' (H3K4me3) at the FLC locus. Prevents trimethylation on 'Lys-27' (H3K27me3) at the same locus. The protein is Protein CDC73 homolog of Arabidopsis thaliana (Mouse-ear cress).